Reading from the N-terminus, the 96-residue chain is Co-chaperonin GroES (96 aa).

This sequence belongs to the GroES chaperonin family. As to quaternary structure, heptamer of 7 subunits arranged in a ring. Interacts with the chaperonin GroEL.

It is found in the cytoplasm. Together with the chaperonin GroEL, plays an essential role in assisting protein folding. The GroEL-GroES system forms a nano-cage that allows encapsulation of the non-native substrate proteins and provides a physical environment optimized to promote and accelerate protein folding. GroES binds to the apical surface of the GroEL ring, thereby capping the opening of the GroEL channel. The chain is Co-chaperonin GroES from Allochromatium vinosum (Chromatium vinosum).